Here is a 316-residue protein sequence, read N- to C-terminus: Lipoyl synthase (316 aa).

[4Fe-4S] cluster is bound by residues cysteine 66, cysteine 71, cysteine 77, cysteine 92, cysteine 96, cysteine 99, and serine 306. Positions 78–295 constitute a Radical SAM core domain; the sequence is YSQQTATFMV…ADIAKSMGFK (218 aa).

This sequence belongs to the radical SAM superfamily. Lipoyl synthase family. Requires [4Fe-4S] cluster as cofactor.

The protein resides in the cytoplasm. It catalyses the reaction [[Fe-S] cluster scaffold protein carrying a second [4Fe-4S](2+) cluster] + N(6)-octanoyl-L-lysyl-[protein] + 2 oxidized [2Fe-2S]-[ferredoxin] + 2 S-adenosyl-L-methionine + 4 H(+) = [[Fe-S] cluster scaffold protein] + N(6)-[(R)-dihydrolipoyl]-L-lysyl-[protein] + 4 Fe(3+) + 2 hydrogen sulfide + 2 5'-deoxyadenosine + 2 L-methionine + 2 reduced [2Fe-2S]-[ferredoxin]. It functions in the pathway protein modification; protein lipoylation via endogenous pathway; protein N(6)-(lipoyl)lysine from octanoyl-[acyl-carrier-protein]: step 2/2. Catalyzes the radical-mediated insertion of two sulfur atoms into the C-6 and C-8 positions of the octanoyl moiety bound to the lipoyl domains of lipoate-dependent enzymes, thereby converting the octanoylated domains into lipoylated derivatives. The protein is Lipoyl synthase of Rhodopirellula baltica (strain DSM 10527 / NCIMB 13988 / SH1).